Consider the following 144-residue polypeptide: Methylglyoxal synthase (144 aa).

One can recognise an MGS-like domain in the interval Met1–Arg144. Residues His8, Lys12, Thr34 to Thr37, and Ser54 to Gly55 contribute to the substrate site. The active-site Proton donor/acceptor is Asp60. His87 is a substrate binding site.

It belongs to the methylglyoxal synthase family.

The catalysed reaction is dihydroxyacetone phosphate = methylglyoxal + phosphate. Its function is as follows. Catalyzes the formation of methylglyoxal from dihydroxyacetone phosphate. The polypeptide is Methylglyoxal synthase (Geobacillus thermodenitrificans (strain NG80-2)).